The following is a 789-amino-acid chain: Kin of IRRE-like protein 1 (789 aa).

Positions 1 to 47 (MTLENRSTCLMTCQSSLLPKKPRFLSQKMWAPHLVVAYLIFVTLALA) are cleaved as a signal peptide. Asn-5, Asn-78, and Asn-172 each carry an N-linked (GlcNAc...) asparagine glycan. Residues 48–531 (LPGTQTRFSQ…REVLPVGIIA (484 aa)) are Extracellular-facing. 5 consecutive Ig-like C2-type domains span residues 49 to 147 (PGTQ…AKLT), 152 to 248 (PEDT…TSIE), 255 to 335 (PTVT…TLVN), 340 to 419 (PRIV…EVPL), and 424 to 520 (PPII…IQLE). Cys-74 and Cys-132 are oxidised to a cystine. Cystine bridges form between Cys-175/Cys-232 and Cys-276/Cys-319. Asn-329 carries N-linked (GlcNAc...) asparagine glycosylation. Cys-361 and Cys-403 are joined by a disulfide. Residues 437 to 439 (RGD) carry the Cell attachment site motif. Cys-445 and Cys-504 form a disulfide bridge. Asn-503 carries an N-linked (GlcNAc...) asparagine glycan. The helical transmembrane segment at 532 to 552 (GATIGAGILLVFSFAALVFFL) threads the bilayer. At 553 to 789 (YRRRKGSRKD…RFQQRMQTHV (237 aa)) the chain is on the cytoplasmic side. Ser-606 is modified (phosphoserine). Phosphotyrosine; by FYN occurs at positions 637 and 638. Residues Tyr-654 and Tyr-657 each carry the phosphotyrosine modification. Positions 687 to 713 (RAPASDYGTEPTPSGPSAPGGTDTTSQ) are disordered. Low complexity predominate over residues 694–712 (GTEPTPSGPSAPGGTDTTS). At Tyr-756 the chain carries Phosphotyrosine.

This sequence belongs to the immunoglobulin superfamily. In terms of assembly, interacts with TJP1/ZO-1 and with NPHS2/podocin (via the C-terminus). Interacts with NPHS1/nephrin (via the Ig-like domains); this interaction is dependent on KIRREL1 glycosylation. Homodimer (via the Ig-like domains). Interacts when tyrosine-phosphorylated with GRB2. Post-translationally, phosphorylation probably regulates the interaction with NPHS2. Phosphorylated at Tyr-637 and Tyr-638 by FYN, leading to GRB2 binding. N-glycosylated.

Its subcellular location is the cell membrane. Its function is as follows. Required for proper function of the glomerular filtration barrier. It is involved in the maintenance of a stable podocyte architecture with interdigitating foot processes connected by specialized cell-cell junctions, known as the slit diaphragm. It is a signaling protein that needs the presence of TEC kinases to fully trans-activate the transcription factor AP-1. The chain is Kin of IRRE-like protein 1 (Kirrel1) from Rattus norvegicus (Rat).